The sequence spans 588 residues: L-fucose isomerase (588 aa).

Catalysis depends on proton acceptor residues E335 and D359. Mn(2+) contacts are provided by E335, D359, and H525.

Belongs to the L-fucose isomerase family. Requires Mn(2+) as cofactor.

It localises to the cytoplasm. The enzyme catalyses L-fucose = L-fuculose. The protein operates within carbohydrate degradation; L-fucose degradation; L-lactaldehyde and glycerone phosphate from L-fucose: step 1/3. Functionally, converts the aldose L-fucose into the corresponding ketose L-fuculose. The protein is L-fucose isomerase of Streptococcus pneumoniae serotype 2 (strain D39 / NCTC 7466).